The following is a 537-amino-acid chain: Carbamoyl phosphate synthase large chain, C-terminal section (537 aa).

Residues M1–G395 form a carbamoyl phosphate synthetic domain region. The ATP-grasp domain maps to R122–I313. ATP contacts are provided by R158, K197, L199, E204, G229, V230, H231, S232, Q272, and E284. Residues Q272, E284, and N286 each contribute to the Mg(2+) site. Mn(2+) is bound by residues Q272, E284, and N286. The MGS-like domain occupies Y396–I537. Residues Y396–I537 form an allosteric domain region.

The protein belongs to the CarB family. As to quaternary structure, composed of two chains; the small (or glutamine) chain promotes the hydrolysis of glutamine to ammonia, which is used by the large (or ammonia) chain to synthesize carbamoyl phosphate. Tetramer of heterodimers (alpha,beta)4. Requires Mg(2+) as cofactor. It depends on Mn(2+) as a cofactor.

It catalyses the reaction hydrogencarbonate + L-glutamine + 2 ATP + H2O = carbamoyl phosphate + L-glutamate + 2 ADP + phosphate + 2 H(+). It carries out the reaction hydrogencarbonate + NH4(+) + 2 ATP = carbamoyl phosphate + 2 ADP + phosphate + 2 H(+). It functions in the pathway amino-acid biosynthesis; L-arginine biosynthesis; carbamoyl phosphate from bicarbonate: step 1/1. The protein operates within pyrimidine metabolism; UMP biosynthesis via de novo pathway; (S)-dihydroorotate from bicarbonate: step 1/3. In terms of biological role, large subunit of the glutamine-dependent carbamoyl phosphate synthetase (CPSase). CPSase catalyzes the formation of carbamoyl phosphate from the ammonia moiety of glutamine, carbonate, and phosphate donated by ATP, constituting the first step of 2 biosynthetic pathways, one leading to arginine and/or urea and the other to pyrimidine nucleotides. The large subunit (synthetase) binds the substrates ammonia (free or transferred from glutamine from the small subunit), hydrogencarbonate and ATP and carries out an ATP-coupled ligase reaction, activating hydrogencarbonate by forming carboxy phosphate which reacts with ammonia to form carbamoyl phosphate. In Aquifex aeolicus (strain VF5), this protein is Carbamoyl phosphate synthase large chain, C-terminal section (carB2).